We begin with the raw amino-acid sequence, 428 residues long: Histone deacetylase 3 (428 aa).

The histone deacetylase stretch occupies residues 3–316; sequence KTVAYFYDPD…WTYETSLLVE (314 aa). 1D-myo-inositol 1,4,5,6-tetrakisphosphate is bound by residues histidine 17, glycine 21, and lysine 25. Histidine 135 is a catalytic residue. The Zn(2+) site is built by aspartate 170, histidine 172, and aspartate 259. Position 265 (arginine 265) interacts with 1D-myo-inositol 1,4,5,6-tetrakisphosphate. Basic and acidic residues-rich tracts occupy residues 388 to 405 and 415 to 428; these read DRTD…ENYS and DGDH…DVEI. The disordered stretch occupies residues 388–428; sequence DRTDEADAEERGPEENYSRPEAPNEFYDGDHDNDKESDVEI. Phosphoserine is present on serine 424.

The protein belongs to the histone deacetylase family. HD type 1 subfamily. As to quaternary structure, interacts with HDAC7 and HDAC9. Interacts with DAXX, KDM4A, HDAC10 and DACH1. Found in a complex with NCOR1 and NCOR2. Component of the N-Cor repressor complex, at least composed of NCOR1, NCOR2, HDAC3, TBL1X, TBL1R, CORO2A and GPS2. Interacts with BCOR, MJD2A/JHDM3A, NRIP1, PRDM6 and SRY. Interacts with BTBD14B. Interacts with GLIS2. Interacts (via the DNA-binding domain) with NR2C1; the interaction recruits phosphorylated NR2C1 to PML bodies for sumoylation. Component of the Notch corepressor complex. Interacts with CBFA2T3 and NKAP. Interacts with APEX1; the interaction is not dependent on the acetylated status of APEX1. Interacts with ZMYND15. Interacts with SMRT/NCOR2 and BCL6 on DNA enhancer elements. Interacts with INSM1. Interacts with XBP1 isoform 1; the interaction occurs in endothelial cell (EC) under disturbed flow. Interacts (via C-terminus) with CCAR2 (via N-terminus). Interacts with and deacetylates MEF2D. Interacts with BEND3. Interacts with NKAPL. Interacts with DHX36; this interaction occurs in a RNA-dependent manner. Interacts weakly with CRY1; this interaction is enhanced in the presence of FBXL3. Interacts with FBXL3 and BMAL1. Interacts with NCOR1. Interacts with RARA. Interacts with SETD5. In terms of assembly, (Microbial infection) Interacts with human cytomegalovirus (HHV-5) immediate early protein IE1; this interaction decreases histone acetylation and allows transcriptional activation by the virus. Requires Zn(2+) as cofactor. In terms of processing, sumoylated in vitro. Deubiquitinated on 'Lys-63'-linked ubiquitin chains by USP38; leading to a decreased level of histone acetylation. As to expression, widely expressed.

It localises to the nucleus. The protein resides in the chromosome. The protein localises to the cytoplasm. Its subcellular location is the cytosol. It carries out the reaction N(6)-acetyl-L-lysyl-[histone] + H2O = L-lysyl-[histone] + acetate. The enzyme catalyses N(6)-acetyl-L-lysyl-[protein] + H2O = L-lysyl-[protein] + acetate. It catalyses the reaction N(6)-(2E)-butenoyl-L-lysyl-[protein] + H2O = (2E)-2-butenoate + L-lysyl-[protein]. The catalysed reaction is N(6)-(2-hydroxyisobutanoyl)-L-lysyl-[protein] + H2O = 2-hydroxy-2-methylpropanoate + L-lysyl-[protein]. It carries out the reaction N(6)-[(S)-lactoyl]-L-lysyl-[protein] + H2O = (S)-lactate + L-lysyl-[protein]. With respect to regulation, inositol tetraphosphate (1D-myo-inositol 1,4,5,6-tetrakisphosphate) promotes the histone deacetylase activity by acting as an intermolecular glue between HDAC3 and NCOR2, thereby promoting its association with the N-Cor complex, a prerequisite for the histone deacetylase activity. In terms of biological role, histone deacetylase that catalyzes the deacetylation of lysine residues on the N-terminal part of the core histones (H2A, H2B, H3 and H4), and some other non-histone substrates. Histone deacetylation gives a tag for epigenetic repression and plays an important role in transcriptional regulation, cell cycle progression and developmental events. Histone deacetylases act via the formation of large multiprotein complexes, such as N-Cor repressor complex, which activate the histone deacetylase activity. Participates in the BCL6 transcriptional repressor activity by deacetylating the H3 'Lys-27' (H3K27) on enhancer elements, antagonizing EP300 acetyltransferase activity and repressing proximal gene expression. Acts as a molecular chaperone for shuttling phosphorylated NR2C1 to PML bodies for sumoylation. Contributes, together with XBP1 isoform 1, to the activation of NFE2L2-mediated HMOX1 transcription factor gene expression in a PI(3)K/mTORC2/Akt-dependent signaling pathway leading to endothelial cell (EC) survival under disturbed flow/oxidative stress. Regulates both the transcriptional activation and repression phases of the circadian clock in a deacetylase activity-independent manner. During the activation phase, promotes the accumulation of ubiquitinated BMAL1 at the E-boxes and during the repression phase, blocks FBXL3-mediated CRY1/2 ubiquitination and promotes the interaction of CRY1 and BMAL1. The NCOR1-HDAC3 complex regulates the circadian expression of the core clock gene BMAL1 and the genes involved in lipid metabolism in the liver. Also functions as a deacetylase for non-histone targets, such as KAT5, MEF2D, MAPK14, RARA and STAT3. Serves as a corepressor of RARA, mediating its deacetylation and repression, leading to inhibition of RARE DNA element binding. In association with RARA, plays a role in the repression of microRNA-10a and thereby in the inflammatory response. In addition to protein deacetylase activity, also acts as a protein-lysine deacylase by recognizing other acyl groups: catalyzes removal of (2E)-butenoyl (crotonyl), lactoyl (lactyl) and 2-hydroxyisobutanoyl (2-hydroxyisobutyryl) acyl groups from lysine residues, leading to protein decrotonylation, delactylation and de-2-hydroxyisobutyrylation, respectively. Catalyzes decrotonylation of MAPRE1/EB1. Mediates delactylation NBN/NBS1, thereby inhibiting DNA double-strand breaks (DSBs) via homologous recombination (HR). The polypeptide is Histone deacetylase 3 (HDAC3) (Homo sapiens (Human)).